The chain runs to 281 residues: Glyceraldehyde dehydrogenase medium chain (281 aa).

The FAD-binding PCMH-type domain maps to 1-176; sequence MYPPEFSYVR…TQIEVPVLDG (176 aa). FAD is bound by residues 31–35 and 110–114; these read AGGQS and TIGGA.

As to quaternary structure, heterotrimer composed of a large chain (CutA), a medium chain (CutB) and a small chain (CutC). Requires FAD as cofactor.

It is found in the cytoplasm. The catalysed reaction is D-glyceraldehyde + A + H2O = (R)-glycerate + AH2 + H(+). Component of the glyceraldehyde dehydrogenase which is involved the nonphosphorylated Entner-Doudoroff pathway. Catalyzes the oxidation of D-glyceraldehyde to yield glycerate. When the artificial electron acceptor 2,6-dichlorophenol-indophenol (Cl2Ind) is used, the enzyme shows a broad substrate range (glyceraldehyde-3-phosphate, formaldehyde, acetaldehyde, propionaldehyde and isobutyraldehyde), but is most active with D-glyceraldehyde. It is not known which acceptor is utilized in vivo. This Sulfolobus acidocaldarius (strain ATCC 33909 / DSM 639 / JCM 8929 / NBRC 15157 / NCIMB 11770) protein is Glyceraldehyde dehydrogenase medium chain (cutB).